Here is a 47-residue protein sequence, read N- to C-terminus: Delta-actitoxin-Aspp1a (47 aa).

Intrachain disulfides connect C4–C44, C6–C34, and C27–C45.

Belongs to the sea anemone sodium channel inhibitory toxin family. Type I subfamily.

Its subcellular location is the secreted. The protein resides in the nematocyst. Functionally, binds specifically to voltage-gated sodium channels (Nav) (site 3), thereby delaying their inactivation during signal transduction. Has a heart stimulation effect on isolated rat atria that is higher than that of Hk7a, Hk8a and Hk16a. This chain is Delta-actitoxin-Aspp1a, found in Anthopleura sp. (strain 'Zhanjiang') (Sea anemone).